The primary structure comprises 327 residues: Protein hunchback (327 aa).

3 consecutive C2H2-type zinc fingers follow at residues 1–5 (HMRNH), 11–33 (FQCS…LKSH), and 39–63 (YRCA…KYQH). Disordered regions lie at residues 91-121 (KQKP…HPIF), 143-170 (PPNN…MSPP), and 182-290 (ERPL…EVAS). Basic and acidic residues-rich tracts occupy residues 205–216 (THREMPTEHGDD) and 265–276 (LQHEDEKMRDAD). C2H2-type zinc fingers lie at residues 297–319 (YTCQ…MGFH) and 325–327 (FMC).

The protein belongs to the hunchback C2H2-type zinc-finger protein family.

It localises to the nucleus. Functionally, gap class segmentation protein that controls development of head structures. This is Protein hunchback (hb) from Manduca sexta (Tobacco hawkmoth).